Consider the following 851-residue polypeptide: Protein translocase subunit SecA (851 aa).

ATP-binding positions include Q88, 106–110, and D496; that span reads GEGKT. Residues C828, C830, C839, and H840 each contribute to the Zn(2+) site.

The protein belongs to the SecA family. As to quaternary structure, monomer and homodimer. Part of the essential Sec protein translocation apparatus which comprises SecA, SecYEG and auxiliary proteins SecDF-YajC and YidC. Zn(2+) is required as a cofactor.

It is found in the cell inner membrane. The protein localises to the cytoplasm. It carries out the reaction ATP + H2O + cellular proteinSide 1 = ADP + phosphate + cellular proteinSide 2.. Functionally, part of the Sec protein translocase complex. Interacts with the SecYEG preprotein conducting channel. Has a central role in coupling the hydrolysis of ATP to the transfer of proteins into and across the cell membrane, serving as an ATP-driven molecular motor driving the stepwise translocation of polypeptide chains across the membrane. This is Protein translocase subunit SecA from Helicobacter hepaticus (strain ATCC 51449 / 3B1).